Here is an 807-residue protein sequence, read N- to C-terminus: G-type lectin S-receptor-like serine/threonine-protein kinase At1g61420 (807 aa).

The signal sequence occupies residues 1–24; the sequence is MGKKWIVFFAYLLLSSFFISSSSA. Residues 25 to 144 form the Bulb-type lectin domain; sequence GITKESPLPI…FSGRTLWQSF (120 aa). At 25–426 the chain is on the extracellular side; that stretch reads GITKESPLPI…ELGGNKRKKA (402 aa). Residues Asn53, Asn94, Asn117, Asn134, Asn236, and Asn267 are each glycosylated (N-linked (GlcNAc...) asparagine). The EGF-like; atypical domain occupies 278 to 314; that stretch reads PEHSCDYYGVCGPFGLCVKSVPPKCTCFKGFVPKLIE. Disulfide bonds link Cys282–Cys294 and Cys288–Cys302. N-linked (GlcNAc...) asparagine glycosylation is found at Asn320, Asn336, and Asn375. The PAN domain occupies 333-413; the sequence is CQGNSTGKYA…EGGELLSIRL (81 aa). 2 disulfide bridges follow: Cys368–Cys389 and Cys372–Cys378. A helical transmembrane segment spans residues 427 to 447; it reads ITASIVSLSLVVIIAFVAFCF. Over 448-807 the chain is Cytoplasmic; that stretch reads WRYRVKHNAD…EMTKSVILGR (360 aa). The region spanning 494–779 is the Protein kinase domain; that stretch reads FSISNKLGQG…DLPPPEQPTF (286 aa). ATP is bound by residues 500–508 and Lys522; that span reads LGQGGFGPV. Phosphoserine is present on residues Ser528 and Ser543. The caM-binding stretch occupies residues 583 to 600; sequence RKRLEIDWPKRLDIIQGI. Catalysis depends on Asp619, which acts as the Proton acceptor. Phosphoserine occurs at positions 623 and 636. Residue Thr653 is modified to Phosphothreonine. 2 positions are modified to phosphoserine: Ser696 and Ser790.

It belongs to the protein kinase superfamily. Ser/Thr protein kinase family.

It is found in the cell membrane. It carries out the reaction L-seryl-[protein] + ATP = O-phospho-L-seryl-[protein] + ADP + H(+). The enzyme catalyses L-threonyl-[protein] + ATP = O-phospho-L-threonyl-[protein] + ADP + H(+). This chain is G-type lectin S-receptor-like serine/threonine-protein kinase At1g61420, found in Arabidopsis thaliana (Mouse-ear cress).